Consider the following 332-residue polypeptide: Probable L-asparaginase (332 aa).

The Asparaginase/glutaminase domain occupies 6–332 (PTIALLATGG…AKIQEMFEEY (327 aa)). T16 (O-isoaspartyl threonine intermediate) is an active-site residue. Substrate contacts are provided by residues S62 and 95–96 (TD).

The protein belongs to the asparaginase 1 family.

The protein localises to the cytoplasm. It carries out the reaction L-asparagine + H2O = L-aspartate + NH4(+). The polypeptide is Probable L-asparaginase (ansA) (Helicobacter pylori (strain J99 / ATCC 700824) (Campylobacter pylori J99)).